The following is a 413-amino-acid chain: Multifunctional CCA protein (413 aa).

2 residues coordinate ATP: Gly8 and Arg11. The CTP site is built by Gly8 and Arg11. Residues Asp21 and Asp23 each contribute to the Mg(2+) site. Arg91, Arg137, and Arg140 together coordinate ATP. CTP-binding residues include Arg91, Arg137, and Arg140. Positions 228 to 329 constitute an HD domain; that stretch reads TGIHTLMTLS…VKLFDSIDAW (102 aa).

Belongs to the tRNA nucleotidyltransferase/poly(A) polymerase family. Bacterial CCA-adding enzyme type 1 subfamily. Monomer. Can also form homodimers and oligomers. Mg(2+) serves as cofactor. The cofactor is Ni(2+).

It carries out the reaction a tRNA precursor + 2 CTP + ATP = a tRNA with a 3' CCA end + 3 diphosphate. It catalyses the reaction a tRNA with a 3' CCA end + 2 CTP + ATP = a tRNA with a 3' CCACCA end + 3 diphosphate. Functionally, catalyzes the addition and repair of the essential 3'-terminal CCA sequence in tRNAs without using a nucleic acid template. Adds these three nucleotides in the order of C, C, and A to the tRNA nucleotide-73, using CTP and ATP as substrates and producing inorganic pyrophosphate. tRNA 3'-terminal CCA addition is required both for tRNA processing and repair. Also involved in tRNA surveillance by mediating tandem CCA addition to generate a CCACCA at the 3' terminus of unstable tRNAs. While stable tRNAs receive only 3'-terminal CCA, unstable tRNAs are marked with CCACCA and rapidly degraded. This Citrobacter koseri (strain ATCC BAA-895 / CDC 4225-83 / SGSC4696) protein is Multifunctional CCA protein.